We begin with the raw amino-acid sequence, 292 residues long: Nitrogenase iron protein 2 (292 aa).

12 to 19 (GKGGIGKS) contributes to the ATP binding site. C97 contributes to the [4Fe-4S] cluster binding site. Residue R100 is modified to ADP-ribosylarginine; by dinitrogenase reductase ADP-ribosyltransferase. C133 contacts [4Fe-4S] cluster.

It belongs to the NifH/BchL/ChlL family. Homodimer. The cofactor is [4Fe-4S] cluster. Post-translationally, the reversible ADP-ribosylation of Arg-100 inactivates the nitrogenase reductase and regulates nitrogenase activity.

The catalysed reaction is N2 + 8 reduced [2Fe-2S]-[ferredoxin] + 16 ATP + 16 H2O = H2 + 8 oxidized [2Fe-2S]-[ferredoxin] + 2 NH4(+) + 16 ADP + 16 phosphate + 6 H(+). Its function is as follows. The key enzymatic reactions in nitrogen fixation are catalyzed by the nitrogenase complex, which has 2 components: the iron protein and the molybdenum-iron protein. The protein is Nitrogenase iron protein 2 (nifH2) of Paenibacillus durus (Paenibacillus azotofixans).